We begin with the raw amino-acid sequence, 570 residues long: Spermatocyte protein spe-26 (570 aa).

Kelch repeat units lie at residues V244–G291, L293–Y338, R341–N393, I395–N440, L442–G487, and L489–N535.

In terms of tissue distribution, testis, in both spermatogonial cells and spermatocytes.

Its subcellular location is the cytoplasm. It localises to the cytoskeleton. In terms of biological role, may play a role in the spermatocyte cytoskeleton, possibly interacting with actin. The polypeptide is Spermatocyte protein spe-26 (spe-26) (Caenorhabditis elegans).